We begin with the raw amino-acid sequence, 343 residues long: Diterpene cyclase DtcycB (343 aa).

N219, S223, and E227 together coordinate Mg(2+).

The protein belongs to the terpene synthase family. Homodimer. The cofactor is Mg(2+).

It carries out the reaction (2E,6E,10E)-geranylgeranyl diphosphate + H2O = (R)-nephthenol + diphosphate. The catalysed reaction is (2E,6E,10E)-geranylgeranyl diphosphate = (R)-cembrene A + diphosphate. It catalyses the reaction (2E,6E,10E)-geranylgeranyl diphosphate + H2O = (1S,4E,8E,12E)-2,2,5,9,13-pentamethylcyclopentadeca-4,8,12-trien-1-ol + diphosphate. Its function is as follows. Diterpene cyclases that can form multiple diterpene products. This Streptomyces sp protein is Diterpene cyclase DtcycB.